The chain runs to 129 residues: Small ribosomal subunit protein uS11 (129 aa).

The protein belongs to the universal ribosomal protein uS11 family. As to quaternary structure, part of the 30S ribosomal subunit. Interacts with proteins S7 and S18. Binds to IF-3.

In terms of biological role, located on the platform of the 30S subunit, it bridges several disparate RNA helices of the 16S rRNA. Forms part of the Shine-Dalgarno cleft in the 70S ribosome. The polypeptide is Small ribosomal subunit protein uS11 (Hamiltonella defensa subsp. Acyrthosiphon pisum (strain 5AT)).